A 300-amino-acid polypeptide reads, in one-letter code: Bidirectional sugar transporter SWEET12 (300 aa).

Residues 1-4 (MVQA) are Extracellular-facing. Residues 5–25 (LVFAVGIVGNILSFLVILAPV) traverse the membrane as a helical segment. In terms of domain architecture, MtN3/slv 1 spans 8–92 (AVGIVGNILS…TVYLLYAPRQ (85 aa)). Residues 26-38 (PTFYRVYKKKSTE) are Cytoplasmic-facing. A helical membrane pass occupies residues 39-61 (SFQSVPYAVALLSAMLWLYYALL). Over 62-67 (TSDLLL) the chain is Extracellular. Residues 68 to 88 (LSINSIGCLVESLYLTVYLLY) form a helical membrane-spanning segment. The Cytoplasmic portion of the chain corresponds to 89–99 (APRQAMAFTLK). A helical transmembrane segment spans residues 100-120 (LVCAMNLALFAAVVAALQLLV). At 121–128 (KATDRRVT) the chain is on the extracellular side. Residues 129 to 149 (LAGGIGASFALAVFVAPLTII) form a helical membrane-spanning segment. Residues 131-213 (GGIGASFALA…VLYVVYKNPK (83 aa)) form the MtN3/slv 2 domain. The Cytoplasmic segment spans residues 150-162 (RQVIRTKSVEFMP). A helical transmembrane segment spans residues 163 to 183 (FWLSFFLTLSAVVWFFYGLLM). Residues 184–185 (KD) are Extracellular-facing. The chain crosses the membrane as a helical span at residues 186–206 (FFVATPNVLGLLFGLAQMVLY). Residues 207 to 300 (VVYKNPKKNS…PPALPAVEVA (94 aa)) are Cytoplasmic-facing. The interval 256 to 300 (ADLEAAAPATPQRPADDDAIDHRSVVVDIPPPPQPPPALPAVEVA) is disordered. Residues 269–280 (PADDDAIDHRSV) are compositionally biased toward basic and acidic residues. Residues 284-294 (IPPPPQPPPAL) show a composition bias toward pro residues.

This sequence belongs to the SWEET sugar transporter family. As to quaternary structure, forms homooligomers and/or heterooligomers.

It localises to the cell membrane. Mediates both low-affinity uptake and efflux of sugar across the plasma membrane. In terms of biological role, confers blight susceptibility. Confers TAL effector-mediated susceptibility to Xanthomonas oryzae pv. oryzae. This is Bidirectional sugar transporter SWEET12 (SWEET12) from Oryza sativa subsp. japonica (Rice).